The sequence spans 126 residues: Small ribosomal subunit protein uS13 (126 aa).

Residues histidine 92–lysine 126 are disordered.

This sequence belongs to the universal ribosomal protein uS13 family. In terms of assembly, part of the 30S ribosomal subunit. Forms a loose heterodimer with protein S19. Forms two bridges to the 50S subunit in the 70S ribosome.

Located at the top of the head of the 30S subunit, it contacts several helices of the 16S rRNA. In the 70S ribosome it contacts the 23S rRNA (bridge B1a) and protein L5 of the 50S subunit (bridge B1b), connecting the 2 subunits; these bridges are implicated in subunit movement. Contacts the tRNAs in the A and P-sites. This chain is Small ribosomal subunit protein uS13, found in Deinococcus radiodurans (strain ATCC 13939 / DSM 20539 / JCM 16871 / CCUG 27074 / LMG 4051 / NBRC 15346 / NCIMB 9279 / VKM B-1422 / R1).